Consider the following 164-residue polypeptide: Protein eva-1 homolog B (164 aa).

A helical transmembrane segment spans residues Gly29–Ile49. A disordered region spans residues Arg56–Ser110. Over residues Glu74–Asp85 the composition is skewed to acidic residues. A phosphothreonine mark is found at Thr86, Thr149, and Thr157.

It belongs to the EVA1 family.

The protein localises to the membrane. The sequence is that of Protein eva-1 homolog B (Eva1b) from Mus musculus (Mouse).